The sequence spans 280 residues: uncharacterized protein (280 aa).

This is an uncharacterized protein from Aedes vexans (Inland floodwater mosquito).